A 538-amino-acid chain; its full sequence is MKMRRYKLFLMFCMAGLCLISFLHFFKTLSYVTFPRELASLSPNLISSFFWNNAPVTPQASPEPGDPDLLRTPLYSHSPLLQPLSPSKATEELHRVDFVLPEDTTEYFVRTKAGGVCFKPGTRMLEKPSPGRTEEKTEVSEGSSARGPARRPMRHVLSSRERLGSRGTRRKWVECVCLPGWHGPSCGVPTVVQYSNLPTKERLVPREVPRRVINAININHEFDLLDVRFHELGDVVDAFVVCDSNFTAYGEPRPLKFREMLTNGTFEYIRHKVLYVFLDHFPPGGRQDGWIADDYLRTFLTQDGVSRLRNLRPDDVFIIDDADEIPARDGVLFLKLYDGWTEPFAFHMRKSLYGFFWKQPGTLEVVSGCTMDMLQAVYGLDGIRLRRRQYYTMPNFRQYENRTGHILVQWSLGSPLHFAGWHCSWCFTPEGIYFKLVSAQNGDFPRWGDYEDKRDLNYIRSLIRTGGWFDGTQQEYPPADPSEHMYAPKYLLKNYDQFRYLLENPYREPKSTVEGGRQNQGSDGRSSAVRGKLDTAEG.

Over 1-7 (MKMRRYK) the chain is Cytoplasmic. A helical; Signal-anchor for type II membrane protein transmembrane segment spans residues 8–23 (LFLMFCMAGLCLISFL). Residues 24-538 (HFFKTLSYVT…VRGKLDTAEG (515 aa)) are Lumenal-facing. The disordered stretch occupies residues 120–161 (PGTRMLEKPSPGRTEEKTEVSEGSSARGPARRPMRHVLSSRE). Asn-245, Asn-263, and Asn-401 each carry an N-linked (GlcNAc...) asparagine glycan. Positions 507 to 538 (REPKSTVEGGRQNQGSDGRSSAVRGKLDTAEG) are disordered.

The protein belongs to the glycosyltransferase 17 family. As to quaternary structure, interacts with MGAT4D. Highly expressed in brain and kidney and to a much lesser extent in stomach, heart, intestine, uterus, testis, ovary and lung. Not present in spleen, liver and muscle. In brain, expressed in neurons of hippocampus.

It is found in the golgi apparatus membrane. The catalysed reaction is N(4)-{beta-D-GlcNAc-(1-&gt;2)-alpha-D-Man-(1-&gt;3)-[beta-D-GlcNAc-(1-&gt;2)-alpha-D-Man-(1-&gt;6)]-beta-D-Man-(1-&gt;4)-beta-D-GlcNAc-(1-&gt;4)-beta-D-GlcNAc}-L-asparaginyl-[protein] + UDP-N-acetyl-alpha-D-glucosamine = N(4)-{beta-D-GlcNAc-(1-&gt;2)-alpha-D-Man-(1-&gt;3)-[beta-D-GlcNAc-(1-&gt;4)]-[beta-D-GlcNAc-(1-&gt;2)-alpha-D-Man-(1-&gt;6)]-beta-D-Man-(1-&gt;4)-beta-D-GlcNAc-(1-&gt;4)-beta-D-GlcNAc}-L-asparaginyl-[protein] + UDP + H(+). Its pathway is protein modification; protein glycosylation. Its function is as follows. It is involved in the regulation of the biosynthesis and biological function of glycoprotein oligosaccharides. Catalyzes the addition of N-acetylglucosamine in beta 1-4 linkage to the beta-linked mannose of the trimannosyl core of N-linked sugar chains, called bisecting N-acetylglucosamine (GlcNAc). It is one of the most important enzymes involved in the regulation of the biosynthesis of glycoprotein oligosaccharides. The addition of this bisecting GlcNAc residue alters not only the composition, but also the conformation of the N-glycan. The introduction of the bisecting GlcNAc residue results in the suppression of further processing and elongation of N-glycans, precluding the formation of beta-1,6 GlcNAc branching, catalyzed by MGAT5 since it is unable to use the bisected oligosaccharide as a substrate. Addition of bisecting N-acetylglucosamine to CDH1/E-cadherin modulates CDH1 cell membrane location. Inhibits NeuAc-alpha-2,3-Gal-beta-1,4-GlcNAc- formation which modulates sialylation levels and plays a role in cell migration regulation. In brain, addition of bisecting N-acetylglucosamine to BACE1 blocks its lysosomal targeting in response to oxidative stress and further degradation which increases its location to early endosome and the APP cleavage. This chain is Beta-1,4-mannosyl-glycoprotein 4-beta-N-acetylglucosaminyltransferase, found in Mus musculus (Mouse).